Here is a 563-residue protein sequence, read N- to C-terminus: MKRLNERSRMVTEGVARAPNRSMYYAIGYEEKDFVKPMVGVANGHSTITPCNSGLQKLADAAVSALEGAGAKAQMFGTPTVSDGIGMGTEGMKYSLVSREVIADSIETCVNGLWQDGVVVIGGCDKNMPGGMMALARTNVPGIYVYGGTIKPGHYKGKDLNIVSAFEAVGEFTSGRLSEEDLKGVEQHACPGSGSCGGMYTANTMSSAFEALGMSLPYSSTMANEDAEKVASTHDSAVVLVEAIKKNLRPRDIITKKSIENAVSVIMAVGGSTNAVLHFLAITSAAEIDWTIDDFERIRKRVPVIVDMKPSGTYLATDLHQAGGIPQVMKILLDDGLLHGDCMTITGKTVAEVLKDVPSVPRADQKVIRTLDNPLYKQGHLAILKGNISPEGCVTKITGLKNPSITGPARVFDSEDDAMAAIMAQKIKDGDIVVIRYEGPKGGPGMREMLAPTSALVGQGLGESVGLITDGRFSGGTWGMVVGHVAPEAYVGGTIALIHEGDSVTIDAHKLLIQLNVDDAEIAKRRAAWKQPKPRYTRGLLAKYAKLASTASKGAVTDLNLND.

Residue C51 participates in [2Fe-2S] cluster binding. D83 provides a ligand contact to Mg(2+). C124 is a [2Fe-2S] cluster binding site. D125 and K126 together coordinate Mg(2+). Residue K126 is modified to N6-carboxylysine. C196 lines the [2Fe-2S] cluster pocket. E448 serves as a coordination point for Mg(2+). S474 functions as the Proton acceptor in the catalytic mechanism.

Belongs to the IlvD/Edd family. As to quaternary structure, homodimer. Requires [2Fe-2S] cluster as cofactor. The cofactor is Mg(2+).

The catalysed reaction is (2R)-2,3-dihydroxy-3-methylbutanoate = 3-methyl-2-oxobutanoate + H2O. It carries out the reaction (2R,3R)-2,3-dihydroxy-3-methylpentanoate = (S)-3-methyl-2-oxopentanoate + H2O. The protein operates within amino-acid biosynthesis; L-isoleucine biosynthesis; L-isoleucine from 2-oxobutanoate: step 3/4. It functions in the pathway amino-acid biosynthesis; L-valine biosynthesis; L-valine from pyruvate: step 3/4. In terms of biological role, functions in the biosynthesis of branched-chain amino acids. Catalyzes the dehydration of (2R,3R)-2,3-dihydroxy-3-methylpentanoate (2,3-dihydroxy-3-methylvalerate) into 2-oxo-3-methylpentanoate (2-oxo-3-methylvalerate) and of (2R)-2,3-dihydroxy-3-methylbutanoate (2,3-dihydroxyisovalerate) into 2-oxo-3-methylbutanoate (2-oxoisovalerate), the penultimate precursor to L-isoleucine and L-valine, respectively. This chain is Dihydroxy-acid dehydratase, found in Polynucleobacter necessarius subsp. necessarius (strain STIR1).